Reading from the N-terminus, the 297-residue chain is Small ribosomal subunit protein uS2 (297 aa).

Positions 266–297 are disordered; that stretch reads GASWDAAEPSDWAATPAAAGQEWAASGATEQW. Residues 282 to 297 show a composition bias toward low complexity; it reads AAAGQEWAASGATEQW.

Belongs to the universal ribosomal protein uS2 family. In terms of assembly, component of the small ribosomal subunit. Mature ribosomes consist of a small (40S) and a large (60S) subunit. The 40S subunit contains about 33 different proteins and 1 molecule of RNA (18S). The 60S subunit contains about 49 different proteins and 3 molecules of RNA (25S, 5.8S and 5S). Interacts with rps21.

Its subcellular location is the cytoplasm. Required for the assembly and/or stability of the 40S ribosomal subunit. Required for the processing of the 20S rRNA-precursor to mature 18S rRNA in a late step of the maturation of 40S ribosomal subunits. This chain is Small ribosomal subunit protein uS2 (rps0), found in Sclerotinia sclerotiorum (strain ATCC 18683 / 1980 / Ss-1) (White mold).